The chain runs to 509 residues: Midnolin (509 aa).

Over residues 1–12 (MDQHPSARSCSS) the composition is skewed to polar residues. The tract at residues 1–27 (MDQHPSARSCSSRGAAPSCESVSGEPP) is disordered. A Ubiquitin-like domain is found at 28 to 102 (MNLYIHSTTG…LTLVPTVEAG (75 aa)). Disordered stretches follow at residues 172 to 295 (GSSE…NTPL), 370 to 404 (QCTSPNSPAPSPPPSPPHTTGLTGLPTTVPSETQP), and 448 to 485 (KRLRRKARRDSRAPYHWLPNRKAGRSNSNSSMSSEGSL). Residues 176-190 (GTTGLSHGASGSASG) are compositionally biased toward low complexity. The segment covering 196–209 (HNPHPHHPHQHPHH) has biased composition (basic residues). Pro residues predominate over residues 220 to 231 (AFPPSPSIPSIP). A compositionally biased stretch (low complexity) spans 261 to 285 (PSSACAPSPSSPSPAASCPEASCSA). A compositionally biased stretch (polar residues) spans 286–295 (KTSGNCNTPL). Residues 376–386 (SPAPSPPPSPP) show a composition bias toward pro residues. Positions 387-400 (HTTGLTGLPTTVPS) are enriched in low complexity.

It is found in the nucleus. The protein localises to the cytoplasm. It localises to the cytosol. Its subcellular location is the nucleolus. In terms of biological role, facilitates ubiquitin-independent proteasomal degradation of polycomb protein CBX4. Plays a role in inhibiting the activity of glucokinase GCK and both glucose-induced and basal insulin secretion. The sequence is that of Midnolin (midn) from Danio rerio (Zebrafish).